The chain runs to 404 residues: Probable ribosomal oxygenase HI_0396 (404 aa).

Residues 102–231 form the JmjC domain; sequence ELGQLWNKFG…LIDGISKGFC (130 aa). 3 residues coordinate Fe cation: histidine 135, aspartate 137, and histidine 199.

The protein belongs to the ROX family. Requires Fe(2+) as cofactor.

Its function is as follows. Oxygenase that catalyzes the hydroxylation of a ribosomal protein. This chain is Probable ribosomal oxygenase HI_0396, found in Haemophilus influenzae (strain ATCC 51907 / DSM 11121 / KW20 / Rd).